A 381-amino-acid polypeptide reads, in one-letter code: Queuine tRNA-ribosyltransferase (381 aa).

The Proton acceptor role is filled by D92. Substrate is bound by residues 92–96, D146, Q190, and G217; that span reads DSGGF. The RNA binding stretch occupies residues 248–254; sequence GVGRPED. D267 acts as the Nucleophile in catalysis. Positions 272-276 are RNA binding; important for wobble base 34 recognition; sequence TRNAR. Residues C305, C307, C310, and H337 each coordinate Zn(2+).

It belongs to the queuine tRNA-ribosyltransferase family. Homodimer. Within each dimer, one monomer is responsible for RNA recognition and catalysis, while the other monomer binds to the replacement base PreQ1. It depends on Zn(2+) as a cofactor.

The catalysed reaction is 7-aminomethyl-7-carbaguanine + guanosine(34) in tRNA = 7-aminomethyl-7-carbaguanosine(34) in tRNA + guanine. The protein operates within tRNA modification; tRNA-queuosine biosynthesis. Functionally, catalyzes the base-exchange of a guanine (G) residue with the queuine precursor 7-aminomethyl-7-deazaguanine (PreQ1) at position 34 (anticodon wobble position) in tRNAs with GU(N) anticodons (tRNA-Asp, -Asn, -His and -Tyr). Catalysis occurs through a double-displacement mechanism. The nucleophile active site attacks the C1' of nucleotide 34 to detach the guanine base from the RNA, forming a covalent enzyme-RNA intermediate. The proton acceptor active site deprotonates the incoming PreQ1, allowing a nucleophilic attack on the C1' of the ribose to form the product. After dissociation, two additional enzymatic reactions on the tRNA convert PreQ1 to queuine (Q), resulting in the hypermodified nucleoside queuosine (7-(((4,5-cis-dihydroxy-2-cyclopenten-1-yl)amino)methyl)-7-deazaguanosine). This is Queuine tRNA-ribosyltransferase from Xanthomonas campestris pv. campestris (strain B100).